The sequence spans 265 residues: Glutamate racemase (265 aa).

Substrate is bound by residues 7-8 (DS) and 39-40 (YG). C70 functions as the Proton donor/acceptor in the catalytic mechanism. Residue 71 to 72 (NT) participates in substrate binding. Residue C177 is the Proton donor/acceptor of the active site.

It belongs to the aspartate/glutamate racemases family.

It catalyses the reaction L-glutamate = D-glutamate. It functions in the pathway cell wall biogenesis; peptidoglycan biosynthesis. In terms of biological role, provides the (R)-glutamate required for cell wall biosynthesis. This Prochlorococcus marinus (strain NATL2A) protein is Glutamate racemase.